We begin with the raw amino-acid sequence, 420 residues long: L-rhamnose isomerase (420 aa).

Mn(2+) is bound by residues H262, D294, and D296.

This sequence belongs to the rhamnose isomerase family. Homotetramer. The cofactor is Mn(2+).

The protein localises to the cytoplasm. It carries out the reaction L-rhamnopyranose = L-rhamnulose. The protein operates within carbohydrate degradation; L-rhamnose degradation; glycerone phosphate from L-rhamnose: step 1/3. Its function is as follows. Catalyzes the interconversion of L-rhamnose and L-rhamnulose. This chain is L-rhamnose isomerase, found in Pectobacterium atrosepticum (strain SCRI 1043 / ATCC BAA-672) (Erwinia carotovora subsp. atroseptica).